Consider the following 421-residue polypeptide: MDKLIITGGARLDGEIRISGAKNAALPILAATLLADGPVTVGNLPHLHDITTMIELFGRMGIEPVIDEKLSVEIDPRTIKTLVAPYELVKTMRASILVLGPMVARFGEAEVALPGGCAIGSRPVDLHIRGLEAMGAKIEVEGGYIKAKAPEGGLRGAHFFFDTVSVTGTENIMMAAALAKGRSVLQNAAREPEVVDLANFINAMGGNVQGAGTDTITIDGVERLHSANYRVMPDRIETGTYLVAAAVTGGRVKVKDTDPTILEAVLEKLKEAGADINTGEDWIELDMHGKRPKAVNLRTAPYPAFPTDMQAQFISLNAIAEGTGAVIETIFENRFMHVYEMHRMGAQIQVEGNTAIVTGVKALKGAPVMATDLRASASLVLSALVAEGDTLIDRIYHIDRGYECIEEKLQMLGAKIRRVPG.

22–23 serves as a coordination point for phosphoenolpyruvate; it reads KN. R93 lines the UDP-N-acetyl-alpha-D-glucosamine pocket. C117 functions as the Proton donor in the catalytic mechanism. Residue C117 is modified to 2-(S-cysteinyl)pyruvic acid O-phosphothioketal. Residues 122 to 126, D308, and I330 each bind UDP-N-acetyl-alpha-D-glucosamine; that span reads RPVDL.

It belongs to the EPSP synthase family. MurA subfamily.

The protein localises to the cytoplasm. It catalyses the reaction phosphoenolpyruvate + UDP-N-acetyl-alpha-D-glucosamine = UDP-N-acetyl-3-O-(1-carboxyvinyl)-alpha-D-glucosamine + phosphate. Its pathway is cell wall biogenesis; peptidoglycan biosynthesis. In terms of biological role, cell wall formation. Adds enolpyruvyl to UDP-N-acetylglucosamine. The protein is UDP-N-acetylglucosamine 1-carboxyvinyltransferase of Pseudomonas putida (strain GB-1).